Here is a 152-residue protein sequence, read N- to C-terminus: Large ribosomal subunit protein uL11 (152 aa).

This sequence belongs to the universal ribosomal protein uL11 family. Part of the ribosomal stalk of the 50S ribosomal subunit. Interacts with L10 and the large rRNA to form the base of the stalk. L10 forms an elongated spine to which L12 dimers bind in a sequential fashion forming a multimeric L10(L12)X complex. One or more lysine residues are methylated.

Functionally, forms part of the ribosomal stalk which helps the ribosome interact with GTP-bound translation factors. This Mycoplasmoides gallisepticum (strain R(low / passage 15 / clone 2)) (Mycoplasma gallisepticum) protein is Large ribosomal subunit protein uL11.